Reading from the N-terminus, the 355-residue chain is Ribosomal RNA large subunit methyltransferase M (355 aa).

S-adenosyl-L-methionine is bound by residues S191, 224 to 227, D243, D263, and D279; that span reads APGG. K308 serves as the catalytic Proton acceptor.

This sequence belongs to the class I-like SAM-binding methyltransferase superfamily. RNA methyltransferase RlmE family. RlmM subfamily. As to quaternary structure, monomer.

It is found in the cytoplasm. It catalyses the reaction cytidine(2498) in 23S rRNA + S-adenosyl-L-methionine = 2'-O-methylcytidine(2498) in 23S rRNA + S-adenosyl-L-homocysteine + H(+). Functionally, catalyzes the 2'-O-methylation at nucleotide C2498 in 23S rRNA. This is Ribosomal RNA large subunit methyltransferase M from Stenotrophomonas maltophilia (strain R551-3).